Reading from the N-terminus, the 84-residue chain is Beta-defensin 119 (84 aa).

Positions Met1–Gly21 are cleaved as a signal peptide. Intrachain disulfides connect Cys28/Cys55, Cys35/Cys49, and Cys39/Cys56.

The protein belongs to the beta-defensin family.

It is found in the secreted. Functionally, has antibacterial activity. The polypeptide is Beta-defensin 119 (DEFB119) (Gorilla gorilla gorilla (Western lowland gorilla)).